The sequence spans 1203 residues: DNA-directed RNA polymerase subunit beta' (1203 aa).

Zn(2+)-binding residues include Cys-60, Cys-62, Cys-75, and Cys-78. Mg(2+)-binding residues include Asp-449, Asp-451, and Asp-453. 4 residues coordinate Zn(2+): Cys-818, Cys-892, Cys-899, and Cys-902. Residues 1180–1203 (RNLESGLDMPESAEESSEEETQTV) are disordered. The segment covering 1190-1203 (ESAEESSEEETQTV) has biased composition (acidic residues).

This sequence belongs to the RNA polymerase beta' chain family. In terms of assembly, the RNAP catalytic core consists of 2 alpha, 1 beta, 1 beta' and 1 omega subunit. When a sigma factor is associated with the core the holoenzyme is formed, which can initiate transcription. Mg(2+) is required as a cofactor. Requires Zn(2+) as cofactor.

It catalyses the reaction RNA(n) + a ribonucleoside 5'-triphosphate = RNA(n+1) + diphosphate. In terms of biological role, DNA-dependent RNA polymerase catalyzes the transcription of DNA into RNA using the four ribonucleoside triphosphates as substrates. In Oceanobacillus iheyensis (strain DSM 14371 / CIP 107618 / JCM 11309 / KCTC 3954 / HTE831), this protein is DNA-directed RNA polymerase subunit beta'.